A 364-amino-acid chain; its full sequence is DNA replication and repair protein RecF (364 aa).

30–37 contacts ATP; it reads GENGSGKT.

This sequence belongs to the RecF family.

It localises to the cytoplasm. The RecF protein is involved in DNA metabolism; it is required for DNA replication and normal SOS inducibility. RecF binds preferentially to single-stranded, linear DNA. It also seems to bind ATP. This is DNA replication and repair protein RecF from Xylella fastidiosa (strain M12).